The primary structure comprises 368 residues: Carbamoyl phosphate synthase small chain (368 aa).

The segment at 1 to 178 is CPSase; sequence MKAVLGLEDG…GAECAWKGSG (178 aa). 3 residues coordinate L-glutamine: serine 45, glycine 230, and glycine 232. The Glutamine amidotransferase type-1 domain maps to 182–368; it reads HAVVVDLGIK…KVVKVLGGDL (187 aa). Cysteine 257 functions as the Nucleophile in the catalytic mechanism. Residues phenylalanine 258, glutamine 261, asparagine 299, glycine 301, and tyrosine 302 each contribute to the L-glutamine site. Residues histidine 342 and glutamate 344 contribute to the active site.

It belongs to the CarA family. In terms of assembly, composed of two chains; the small (or glutamine) chain promotes the hydrolysis of glutamine to ammonia, which is used by the large (or ammonia) chain to synthesize carbamoyl phosphate. Tetramer of heterodimers (alpha,beta)4.

The catalysed reaction is hydrogencarbonate + L-glutamine + 2 ATP + H2O = carbamoyl phosphate + L-glutamate + 2 ADP + phosphate + 2 H(+). The enzyme catalyses L-glutamine + H2O = L-glutamate + NH4(+). The protein operates within amino-acid biosynthesis; L-arginine biosynthesis; carbamoyl phosphate from bicarbonate: step 1/1. It participates in pyrimidine metabolism; UMP biosynthesis via de novo pathway; (S)-dihydroorotate from bicarbonate: step 1/3. Small subunit of the glutamine-dependent carbamoyl phosphate synthetase (CPSase). CPSase catalyzes the formation of carbamoyl phosphate from the ammonia moiety of glutamine, carbonate, and phosphate donated by ATP, constituting the first step of 2 biosynthetic pathways, one leading to arginine and/or urea and the other to pyrimidine nucleotides. The small subunit (glutamine amidotransferase) binds and cleaves glutamine to supply the large subunit with the substrate ammonia. The chain is Carbamoyl phosphate synthase small chain from Methanosarcina acetivorans (strain ATCC 35395 / DSM 2834 / JCM 12185 / C2A).